We begin with the raw amino-acid sequence, 217 residues long: ATP-dependent Clp protease proteolytic subunit 3 (217 aa).

A compositionally biased stretch (low complexity) spans 1-13; sequence MSPFTAGPAPART. The disordered stretch occupies residues 1–23; that stretch reads MSPFTAGPAPARTPRAEEGDTPA. The Nucleophile role is filled by S108. H133 is a catalytic residue.

It belongs to the peptidase S14 family. Fourteen ClpP subunits assemble into 2 heptameric rings which stack back to back to give a disk-like structure with a central cavity, resembling the structure of eukaryotic proteasomes.

Its subcellular location is the cytoplasm. It carries out the reaction Hydrolysis of proteins to small peptides in the presence of ATP and magnesium. alpha-casein is the usual test substrate. In the absence of ATP, only oligopeptides shorter than five residues are hydrolyzed (such as succinyl-Leu-Tyr-|-NHMec, and Leu-Tyr-Leu-|-Tyr-Trp, in which cleavage of the -Tyr-|-Leu- and -Tyr-|-Trp bonds also occurs).. Cleaves peptides in various proteins in a process that requires ATP hydrolysis. Has a chymotrypsin-like activity. Plays a major role in the degradation of misfolded proteins. This is ATP-dependent Clp protease proteolytic subunit 3 from Streptomyces coelicolor (strain ATCC BAA-471 / A3(2) / M145).